The primary structure comprises 271 residues: Tryptophan synthase alpha chain (271 aa).

Catalysis depends on proton acceptor residues E49 and D60.

Belongs to the TrpA family. Tetramer of two alpha and two beta chains.

It catalyses the reaction (1S,2R)-1-C-(indol-3-yl)glycerol 3-phosphate + L-serine = D-glyceraldehyde 3-phosphate + L-tryptophan + H2O. The protein operates within amino-acid biosynthesis; L-tryptophan biosynthesis; L-tryptophan from chorismate: step 5/5. Functionally, the alpha subunit is responsible for the aldol cleavage of indoleglycerol phosphate to indole and glyceraldehyde 3-phosphate. The sequence is that of Tryptophan synthase alpha chain from Rhizorhabdus wittichii (strain DSM 6014 / CCUG 31198 / JCM 15750 / NBRC 105917 / EY 4224 / RW1) (Sphingomonas wittichii).